The sequence spans 238 residues: MELLDKVLEYYKVKNPLVVKHLLIKYMNLVLEKNKLFNLTAIENEEEFVIKHIADSLSLLKFIEQENSNQNPVAIDIGSGFGAPGLFVKIAMPSVNVFLNDSNKKKCKFMNEAKESLGISGVNVVCERAEVLGRKEEFREKFDFVFARAVDRLNVLCEYAIPLLKVGGAFLAQKGFECEDEIDLAKNAIEILGGEIYSIEKFVLPYSDEKRSIIIIKKLRQTPSNFPRNTKQIVKKPL.

Residues Gly-78, Ala-129 to Glu-130, and Arg-148 contribute to the S-adenosyl-L-methionine site.

The protein belongs to the methyltransferase superfamily. RNA methyltransferase RsmG family.

It localises to the cytoplasm. Specifically methylates the N7 position of a guanine in 16S rRNA. The sequence is that of Ribosomal RNA small subunit methyltransferase G from Caldicellulosiruptor bescii (strain ATCC BAA-1888 / DSM 6725 / KCTC 15123 / Z-1320) (Anaerocellum thermophilum).